The sequence spans 195 residues: ATP-dependent Clp protease proteolytic subunit (195 aa).

The active-site Nucleophile is S98. H123 is an active-site residue.

This sequence belongs to the peptidase S14 family. As to quaternary structure, fourteen ClpP subunits assemble into 2 heptameric rings which stack back to back to give a disk-like structure with a central cavity, resembling the structure of eukaryotic proteasomes.

It localises to the cytoplasm. The catalysed reaction is Hydrolysis of proteins to small peptides in the presence of ATP and magnesium. alpha-casein is the usual test substrate. In the absence of ATP, only oligopeptides shorter than five residues are hydrolyzed (such as succinyl-Leu-Tyr-|-NHMec, and Leu-Tyr-Leu-|-Tyr-Trp, in which cleavage of the -Tyr-|-Leu- and -Tyr-|-Trp bonds also occurs).. Cleaves peptides in various proteins in a process that requires ATP hydrolysis. Has a chymotrypsin-like activity. Plays a major role in the degradation of misfolded proteins. This chain is ATP-dependent Clp protease proteolytic subunit, found in Wolinella succinogenes (strain ATCC 29543 / DSM 1740 / CCUG 13145 / JCM 31913 / LMG 7466 / NCTC 11488 / FDC 602W) (Vibrio succinogenes).